The sequence spans 442 residues: 3-phosphoshikimate 1-carboxyvinyltransferase (442 aa).

Residues Lys-25, Ser-26, and Arg-30 each contribute to the 3-phosphoshikimate site. Residue Lys-25 participates in phosphoenolpyruvate binding. The phosphoenolpyruvate site is built by Gly-97 and Arg-125. 3-phosphoshikimate is bound by residues Ser-170, Gln-172, Asp-323, and Lys-350. Gln-172 contributes to the phosphoenolpyruvate binding site. Catalysis depends on Asp-323, which acts as the Proton acceptor. Phosphoenolpyruvate contacts are provided by Arg-354 and Arg-399.

The protein belongs to the EPSP synthase family. Monomer.

The protein localises to the cytoplasm. It catalyses the reaction 3-phosphoshikimate + phosphoenolpyruvate = 5-O-(1-carboxyvinyl)-3-phosphoshikimate + phosphate. It functions in the pathway metabolic intermediate biosynthesis; chorismate biosynthesis; chorismate from D-erythrose 4-phosphate and phosphoenolpyruvate: step 6/7. Catalyzes the transfer of the enolpyruvyl moiety of phosphoenolpyruvate (PEP) to the 5-hydroxyl of shikimate-3-phosphate (S3P) to produce enolpyruvyl shikimate-3-phosphate and inorganic phosphate. This Bartonella quintana (strain Toulouse) (Rochalimaea quintana) protein is 3-phosphoshikimate 1-carboxyvinyltransferase.